Here is a 124-residue protein sequence, read N- to C-terminus: S-adenosylmethionine decarboxylase proenzyme (124 aa).

The Schiff-base intermediate with substrate; via pyruvic acid role is filled by serine 71. Serine 71 is modified (pyruvic acid (Ser); by autocatalysis). Histidine 76 acts as the Proton acceptor; for processing activity in catalysis. Cysteine 91 acts as the Proton donor; for catalytic activity in catalysis.

It belongs to the prokaryotic AdoMetDC family. Type 1 subfamily. As to quaternary structure, heterotetramer of two alpha and two beta chains arranged as a dimer of alpha/beta heterodimers. Requires pyruvate as cofactor. In terms of processing, is synthesized initially as an inactive proenzyme. Formation of the active enzyme involves a self-maturation process in which the active site pyruvoyl group is generated from an internal serine residue via an autocatalytic post-translational modification. Two non-identical subunits are generated from the proenzyme in this reaction, and the pyruvate is formed at the N-terminus of the alpha chain, which is derived from the carboxyl end of the proenzyme. The post-translation cleavage follows an unusual pathway, termed non-hydrolytic serinolysis, in which the side chain hydroxyl group of the serine supplies its oxygen atom to form the C-terminus of the beta chain, while the remainder of the serine residue undergoes an oxidative deamination to produce ammonia and the pyruvoyl group blocking the N-terminus of the alpha chain.

It catalyses the reaction S-adenosyl-L-methionine + H(+) = S-adenosyl 3-(methylsulfanyl)propylamine + CO2. The protein operates within amine and polyamine biosynthesis; S-adenosylmethioninamine biosynthesis; S-adenosylmethioninamine from S-adenosyl-L-methionine: step 1/1. With respect to regulation, competitively inhibited by methylglyoxal bis-guanylhydrazone. Irreversibly inhibited by NaBH(4) in vitro. Functionally, catalyzes the decarboxylation of S-adenosylmethionine to S-adenosylmethioninamine (dcAdoMet), the propylamine donor required for the synthesis of the polyamines spermine and spermidine from the diamine putrescine. Has no arginine decarboxylase (ArgDC) activity. This is S-adenosylmethionine decarboxylase proenzyme (speH) from Saccharolobus solfataricus (strain ATCC 35092 / DSM 1617 / JCM 11322 / P2) (Sulfolobus solfataricus).